Reading from the N-terminus, the 910-residue chain is MVSLLKKLIGSRNDRLLKQYRKLVTQINNLEPQIAALSDEALQAKTQEFRDRHAKGTSLDDLLPEAFAVVREAGKRVFGMRHFDAQLLGGIALHNGKIAEMRTGEGKTLMATLPVYLNAIAAKGVHVVTVNDYLARRDADWMGRLYRFLGMSTGVVVPQQPNEEKIAAYRADITYGTNNEFGFDYLRDNMEYRVEDRRQRGLAYAIVDEVDSILIDEARTPLIISGQAEDHTELYVRMNAVPPLLKRMAGEPKPHEPEPEGDYWVDEKSQQVHLSESGHESAEKILTRLGILPEGESLYDPRHIALMHHMMVALRAHTLFFLDQQYVIQDGEVVIVDEFTGRLMAGRRWSDGLHQAVEAKEGVKIQHENQTLASITFQNYFRMYEKLSGMTGTADTEAYEFQEIYSLETVIIPTNKPMQRKDQNDQVFRTSQEKYNAILNDIRDCHERGQPVLVGTTSIENSELLSGLLKKAKLPHEVLNAKQHAREAEIVAEAGKPGHITIATNMAGRGTDIVLGGSVEKQIDLIRADENLSEAEKTARIERVRQEWKPLNEQVKAAGGLRIIGTERHESRRIDNQLRGRAGRQGDPGSSRFYLSLEDPLMRIFAGDRVRAIMERLKLPEGEPIEAGMVTRSIETAQRKVEGRNFDIRKQLLEYDDVANDQRKVLYAQRNDVLEAKTIGASVENLRDAAVTELFRGFVPAESVEEQWDIAGLQQALASDWQLQLPLAEMVEAEPKLTDEELLERVLQAARDTYRSKSELVGEESWGQFERSIMLQSIDTHWREHLSALDYLRQGIHLRGYAQKNPKQEYKREAFELFSGMLDRIRDDVVRVLMTVRVQSTEQVAQAEAEAAQSHVQNVQFHHSDYDEALASEAAEAQEPVRNVLPKVGRNDACPCGSGKKYKQCHGKLT.

ATP is bound by residues Gln-86, 104 to 108 (GEGKT), and Asp-512. Zn(2+) is bound by residues Cys-894, Cys-896, Cys-905, and His-906.

It belongs to the SecA family. As to quaternary structure, monomer and homodimer. Part of the essential Sec protein translocation apparatus which comprises SecA, SecYEG and auxiliary proteins SecDF-YajC and YidC. It depends on Zn(2+) as a cofactor.

The protein resides in the cell inner membrane. Its subcellular location is the cytoplasm. The enzyme catalyses ATP + H2O + cellular proteinSide 1 = ADP + phosphate + cellular proteinSide 2.. Functionally, part of the Sec protein translocase complex. Interacts with the SecYEG preprotein conducting channel. Has a central role in coupling the hydrolysis of ATP to the transfer of proteins into and across the cell membrane, serving both as a receptor for the preprotein-SecB complex and as an ATP-driven molecular motor driving the stepwise translocation of polypeptide chains across the membrane. This is Protein translocase subunit SecA 1 from Bordetella avium (strain 197N).